The sequence spans 634 residues: MYDLLKTIDDPADLRRLDRRQLQPLADELRAFVLDSVSKTGGHLSSNLGTVELTIALHYVFNTPNDRIVWDVGHQTYPHKILTGRRDQMHSLRQQDGISGFPRRSESEYDTFGTAHSSTSISAALGMAIGSQLNGDDRFSIAVIGDGAMTAGMAFEAMNNAGVSEDAKVLVILNDNDMSISPPVGALNRHLARLMSGRFYAAARAGVERVLSVAPPVLELARKLEEHAKGMVVPATLFEEFGFNYIGPIDGHDLDSLIPTLQNIRELRGPQFLHVVTKKGQGYKLAEADPVLYHGPGKFNPAEGIKPSTTPAKKTYTQVFGEWLCDEAERDTRVVGITPAMREGSGMVEFEKRFKDRYYDVGIAEQHAVTFAGGMATEGLKPVVAIYSTFLQRAYDQLIHDVALQNLPVVFAIDRAGLVGADGATHAGAYDLAFMRCIPNMTIMAASDENECRQMLHTALQQPNPTAVRYPRGAGTGVPTVKEFTEIPLGKGEVRRQTSQPEGKRVAILAFGTMVAPSLAAAEELDATVANMRFVKPVDAALVRELAETHDYLVTVEEGCVMGGAGSACVEALMESGVIRPVLQLGLPDLFIDHGDPAKLLSQCGLDGAGIAKSIRERFLNPAADVAGQAKRVA.

Thiamine diphosphate-binding positions include histidine 74 and 115–117 (AHS). Aspartate 146 lines the Mg(2+) pocket. Thiamine diphosphate-binding positions include 147–148 (GA), asparagine 176, tyrosine 283, and glutamate 365. Residue asparagine 176 coordinates Mg(2+).

It belongs to the transketolase family. DXPS subfamily. Homodimer. Mg(2+) is required as a cofactor. Requires thiamine diphosphate as cofactor.

It catalyses the reaction D-glyceraldehyde 3-phosphate + pyruvate + H(+) = 1-deoxy-D-xylulose 5-phosphate + CO2. It functions in the pathway metabolic intermediate biosynthesis; 1-deoxy-D-xylulose 5-phosphate biosynthesis; 1-deoxy-D-xylulose 5-phosphate from D-glyceraldehyde 3-phosphate and pyruvate: step 1/1. Functionally, catalyzes the acyloin condensation reaction between C atoms 2 and 3 of pyruvate and glyceraldehyde 3-phosphate to yield 1-deoxy-D-xylulose-5-phosphate (DXP). The sequence is that of 1-deoxy-D-xylulose-5-phosphate synthase from Burkholderia lata (strain ATCC 17760 / DSM 23089 / LMG 22485 / NCIMB 9086 / R18194 / 383).